The chain runs to 146 residues: Large ribosomal subunit protein uL15 (146 aa).

A disordered region spans residues 1 to 53 (MILSNLKPVPGARHSKKRLGRGPGSGTGKTSGKGHKGQKARSGGGVRPGFEGG). Composition is skewed to gly residues over residues 21-31 (RGPGSGTGKTS) and 42-52 (SGGGVRPGFEG).

It belongs to the universal ribosomal protein uL15 family. Part of the 50S ribosomal subunit.

Its function is as follows. Binds to the 23S rRNA. This Acholeplasma laidlawii (strain PG-8A) protein is Large ribosomal subunit protein uL15.